We begin with the raw amino-acid sequence, 394 residues long: F-box/kelch-repeat protein At1g23390 (394 aa).

Residues 15–62 (EEESSIDGDILESILSYLPLLDLDSACQVSKSWNRAVFYSLRRLKTMP) enclose the F-box domain. Kelch repeat units follow at residues 65 to 111 (FVYN…RSSH), 155 to 204 (SLII…TWLS), 206 to 252 (AVSS…SIGF), and 321 to 369 (MVYV…VIVA).

The sequence is that of F-box/kelch-repeat protein At1g23390 from Arabidopsis thaliana (Mouse-ear cress).